The following is a 131-amino-acid chain: uncharacterized protein (131 aa).

The segment at 64-81 adopts a CCHC-type; degenerate zinc-finger fold; that stretch reads VNCDKCGKPGNVKNDCPG.

This is an uncharacterized protein from Homo sapiens (Human).